Consider the following 57-residue polypeptide: Large ribosomal subunit protein bL32 (57 aa).

Belongs to the bacterial ribosomal protein bL32 family.

The polypeptide is Large ribosomal subunit protein bL32 (Shouchella clausii (strain KSM-K16) (Alkalihalobacillus clausii)).